Reading from the N-terminus, the 369-residue chain is DNA replication and repair protein RecF (369 aa).

30–37 (GDNAQGKT) is a binding site for ATP.

Belongs to the RecF family.

It is found in the cytoplasm. Functionally, the RecF protein is involved in DNA metabolism; it is required for DNA replication and normal SOS inducibility. RecF binds preferentially to single-stranded, linear DNA. It also seems to bind ATP. This chain is DNA replication and repair protein RecF, found in Streptococcus equi subsp. zooepidemicus (strain H70).